The following is a 241-amino-acid chain: Ribonuclease PH (241 aa).

Phosphate-binding positions include Arg-89 and 127–129 (GTR).

Belongs to the RNase PH family. Homohexameric ring arranged as a trimer of dimers.

It catalyses the reaction tRNA(n+1) + phosphate = tRNA(n) + a ribonucleoside 5'-diphosphate. Phosphorolytic 3'-5' exoribonuclease that plays an important role in tRNA 3'-end maturation. Removes nucleotide residues following the 3'-CCA terminus of tRNAs; can also add nucleotides to the ends of RNA molecules by using nucleoside diphosphates as substrates, but this may not be physiologically important. Probably plays a role in initiation of 16S rRNA degradation (leading to ribosome degradation) during starvation. This chain is Ribonuclease PH, found in Xanthomonas axonopodis pv. citri (strain 306).